Reading from the N-terminus, the 207-residue chain is dITP/XTP pyrophosphatase (207 aa).

Substrate is bound at residue 11–16 (TGNPGK). Catalysis depends on aspartate 72, which acts as the Proton acceptor. Mg(2+) is bound at residue aspartate 72. Substrate-binding positions include serine 73, 154–157 (FGYD), lysine 177, and 182–183 (HR).

It belongs to the HAM1 NTPase family. In terms of assembly, homodimer. Mg(2+) serves as cofactor.

It catalyses the reaction XTP + H2O = XMP + diphosphate + H(+). The enzyme catalyses dITP + H2O = dIMP + diphosphate + H(+). The catalysed reaction is ITP + H2O = IMP + diphosphate + H(+). Its function is as follows. Pyrophosphatase that catalyzes the hydrolysis of nucleoside triphosphates to their monophosphate derivatives, with a high preference for the non-canonical purine nucleotides XTP (xanthosine triphosphate), dITP (deoxyinosine triphosphate) and ITP. Seems to function as a house-cleaning enzyme that removes non-canonical purine nucleotides from the nucleotide pool, thus preventing their incorporation into DNA/RNA and avoiding chromosomal lesions. In Thermus thermophilus (strain ATCC 27634 / DSM 579 / HB8), this protein is dITP/XTP pyrophosphatase.